Consider the following 190-residue polypeptide: Elongation factor P (190 aa).

The protein belongs to the elongation factor P family.

Its subcellular location is the cytoplasm. It participates in protein biosynthesis; polypeptide chain elongation. Functionally, involved in peptide bond synthesis. Stimulates efficient translation and peptide-bond synthesis on native or reconstituted 70S ribosomes in vitro. Probably functions indirectly by altering the affinity of the ribosome for aminoacyl-tRNA, thus increasing their reactivity as acceptors for peptidyl transferase. This chain is Elongation factor P, found in Pseudomonas fluorescens (strain ATCC BAA-477 / NRRL B-23932 / Pf-5).